Reading from the N-terminus, the 230-residue chain is Small ribosomal subunit protein uS3c (230 aa).

The region spanning 39–109 (IRSFIHSKLS…QLRVNVVEIA (71 aa)) is the KH type-2 domain.

Belongs to the universal ribosomal protein uS3 family. As to quaternary structure, part of the 30S ribosomal subunit.

Its subcellular location is the plastid. It is found in the chloroplast. This Pyropia yezoensis (Susabi-nori) protein is Small ribosomal subunit protein uS3c (rps3).